The primary structure comprises 225 residues: uncharacterized protein (225 aa).

A disordered region spans residues 32-82 (PKDKKKQNDTENKKKQPKDGENDKQKEQAETQPFEWIQQKDADDKKESNTA). Basic and acidic residues-rich tracts occupy residues 37–60 (KQND…KEQA) and 69–79 (QQKDADDKKES).

This sequence belongs to the MG067/MG068/MG395 family.

This is an uncharacterized protein from Mycoplasma pneumoniae (strain ATCC 29342 / M129 / Subtype 1) (Mycoplasmoides pneumoniae).